The following is a 300-amino-acid chain: Iodotyrosine deiodinase (300 aa).

Residues 15 to 31 (VGLISVSIAAGVALGQL) form a helical membrane-spanning segment. FMN contacts are provided by residues 110-114 (RRSVR), serine 138, and 138-139 (SG). Positions 140, 167, 171, and 192 each coordinate 3,5-diiodo-L-tyrosine. Alanine 140, glutamate 167, tyrosine 171, and lysine 192 together coordinate 3-iodo-L-tyrosine. FMN contacts are provided by residues 247-249 (TTT) and arginine 289.

Belongs to the nitroreductase family. The cofactor is FMN. May be cleaved at Gln-55. The cleaved form retains catalytic activity.

It is found in the membrane. It catalyses the reaction 2 iodide + L-tyrosine + 2 NADP(+) = 3,5-diiodo-L-tyrosine + 2 NADPH + H(+). It carries out the reaction iodide + L-tyrosine + NADP(+) = 3-iodo-L-tyrosine + NADPH. The enzyme catalyses 3-iodo-L-tyrosine + iodide + NADP(+) = 3,5-diiodo-L-tyrosine + NADPH + H(+). The catalysed reaction is L-tyrosine + chloride + NADP(+) = 3-chloro-L-tyrosine + NADPH. It catalyses the reaction bromide + L-tyrosine + NADP(+) = 3-bromo-L-tyrosine + NADPH. In terms of biological role, catalyzes the dehalogenation of halotyrosines such as 3,5-diiodo-L-tyrosine. Likely to also catalyze the dehalogenation of other halotyrosines such as 3-bromo-L-tyrosine, 3-chloro-L-tyrosine and 3-iodo-L-tyrosine. The sequence is that of Iodotyrosine deiodinase from Daphnia pulex (Water flea).